Consider the following 184-residue polypeptide: Phosducin-like protein 3 (184 aa).

Residues 45–184 (HGELKEIDEQ…VKNNKFKEDD (140 aa)) are thioredoxin fold.

The protein belongs to the phosducin family.

The protein is Phosducin-like protein 3 (phlp3) of Dictyostelium discoideum (Social amoeba).